Consider the following 201-residue polypeptide: Pyridoxal 5'-phosphate synthase subunit PdxT (201 aa).

49–51 contributes to the L-glutamine binding site; it reads GES. Residue C81 is the Nucleophile of the active site. L-glutamine contacts are provided by residues R110 and 139-140; that span reads IR. Residues H175 and E177 each act as charge relay system in the active site.

This sequence belongs to the glutaminase PdxT/SNO family. In the presence of PdxS, forms a dodecamer of heterodimers. Only shows activity in the heterodimer.

The catalysed reaction is aldehydo-D-ribose 5-phosphate + D-glyceraldehyde 3-phosphate + L-glutamine = pyridoxal 5'-phosphate + L-glutamate + phosphate + 3 H2O + H(+). The enzyme catalyses L-glutamine + H2O = L-glutamate + NH4(+). The protein operates within cofactor biosynthesis; pyridoxal 5'-phosphate biosynthesis. Catalyzes the hydrolysis of glutamine to glutamate and ammonia as part of the biosynthesis of pyridoxal 5'-phosphate. The resulting ammonia molecule is channeled to the active site of PdxS. The protein is Pyridoxal 5'-phosphate synthase subunit PdxT of Streptomyces avermitilis (strain ATCC 31267 / DSM 46492 / JCM 5070 / NBRC 14893 / NCIMB 12804 / NRRL 8165 / MA-4680).